The sequence spans 1203 residues: DNA-directed RNA polymerase subunit beta' (1203 aa).

Residues cysteine 60, cysteine 62, cysteine 75, and cysteine 78 each coordinate Zn(2+). Mg(2+) is bound by residues aspartate 449, aspartate 451, and aspartate 453. 4 residues coordinate Zn(2+): cysteine 818, cysteine 892, cysteine 899, and cysteine 902.

Belongs to the RNA polymerase beta' chain family. As to quaternary structure, the RNAP catalytic core consists of 2 alpha, 1 beta, 1 beta' and 1 omega subunit. When a sigma factor is associated with the core the holoenzyme is formed, which can initiate transcription. Requires Mg(2+) as cofactor. Zn(2+) is required as a cofactor.

It catalyses the reaction RNA(n) + a ribonucleoside 5'-triphosphate = RNA(n+1) + diphosphate. DNA-dependent RNA polymerase catalyzes the transcription of DNA into RNA using the four ribonucleoside triphosphates as substrates. In Bacillus thuringiensis (strain Al Hakam), this protein is DNA-directed RNA polymerase subunit beta'.